A 762-amino-acid polypeptide reads, in one-letter code: Lysyl oxidase homolog 2B (762 aa).

Positions 1-20 are cleaved as a signal peptide; the sequence is MLALWSISFVLLCSWRLSYA. 4 SRCR domains span residues 53 to 154, 183 to 292, 316 to 417, and 427 to 536; these read LRLA…VVCS, IRPI…VSCI, VRLR…VKCN, and LRLS…VSCS. 9 disulfide bridges follow: C79–C143, C92–C153, C123–C133, C213–C281, C226–C291, C260–C270, C341–C406, C354–C416, and C385–C395. A glycan (N-linked (GlcNAc...) asparagine) is linked at N278. N-linked (GlcNAc...) asparagine glycosylation occurs at N447. 3 disulfides stabilise this stretch: C456/C522, C469/C535, and C503/C513. A lysyl-oxidase like region spans residues 540-742; sequence PDLVLNPQVV…WMYNCHIGGS (203 aa). Ca(2+) is bound by residues D541 and L542. 4 disulfides stabilise this stretch: C565–C616, C571–C686, C648–C664, and C654–C676. The Cu cation site is built by H617, H619, and H621. N-linked (GlcNAc...) asparagine glycosylation is present at N635. The segment at residues 644–680 is a cross-link (lysine tyrosylquinone (Lys-Tyr)); the sequence is KASFCLEDSECDEGIEKRYECANFGEQGITVGCWDTY. Y680 is modified (2',4',5'-topaquinone). Ca(2+)-binding residues include E713, D715, N718, and N719. A disulfide bridge links C723 with C737.

The protein belongs to the lysyl oxidase family. It depends on Cu cation as a cofactor. The cofactor is lysine tyrosylquinone residue. Post-translationally, the lysine tyrosylquinone cross-link (LTQ) is generated by condensation of the epsilon-amino group of a lysine with a topaquinone produced by oxidation of tyrosine.

It localises to the secreted. The protein localises to the extracellular space. It is found in the extracellular matrix. The protein resides in the basement membrane. Its subcellular location is the nucleus. It localises to the chromosome. The protein localises to the endoplasmic reticulum. The catalysed reaction is L-lysyl-[protein] + O2 + H2O = (S)-2-amino-6-oxohexanoyl-[protein] + H2O2 + NH4(+). Mediates the post-translational oxidative deamination of lysine residues on target proteins leading to the formation of deaminated lysine (allysine). Acts as a transcription corepressor and specifically mediates deamination of trimethylated 'Lys-4' of histone H3 (H3K4me3), a specific tag for epigenetic transcriptional activation. Shows no activity against histone H3 when it is trimethylated on 'Lys-9' (H3K9me3) or 'Lys-27' (H3K27me3) or when 'Lys-4' is monomethylated (H3K4me1) or dimethylated (H3K4me2). Also mediates deamination of methylated TAF10, a member of the transcription factor IID (TFIID) complex, which induces release of TAF10 from promoters, leading to inhibition of TFIID-dependent transcription. LOXL2-mediated deamination of TAF10 results in transcriptional repression of genes required for embryonic stem cell pluripotency. Involved in epithelial to mesenchymal transition (EMT) and participates in repression of E-cadherin, probably by mediating deamination of histone H3. When secreted into the extracellular matrix, promotes cross-linking of extracellular matrix proteins by mediating oxidative deamination of peptidyl lysine residues in precursors to fibrous collagen and elastin. Acts as a regulator of sprouting angiogenesis, probably via collagen IV scaffolding. Acts as a regulator of chondrocyte differentiation, probably by regulating expression of factors that control chondrocyte differentiation. Required with loxl2a for correct expression of Sox2 and for neural differentiation. This is Lysyl oxidase homolog 2B (loxl2b) from Danio rerio (Zebrafish).